Consider the following 349-residue polypeptide: Insulin gene enhancer protein isl-1 (349 aa).

LIM zinc-binding domains follow at residues 17-70 and 79-133; these read CVGC…CKRD and CAKC…RADH. The segment at residues 181 to 240 is a DNA-binding region (homeobox); it reads TTRVRTVLNEKQLHTLRTCYNANPRPDALMKEQLVEMTGLSPRVIRVWFQNKRCKDKKRS. The disordered stretch occupies residues 312 to 349; it reads VNFSEGGPGSNSTGSEVASMSSQLPDTPNSMVASPIEA. Residues 321–343 show a composition bias toward polar residues; it reads SNSTGSEVASMSSQLPDTPNSMV.

Its subcellular location is the nucleus. Functionally, DNA-binding transcriptional activator. Recognizes and binds to the consensus octamer binding site 5'-ATAATTAA-3' in promoter of target genes. Plays a fundamental role in the gene regulatory network essential for retinal ganglion cell (RGC) differentiation. May be involved in subtype specialization of primary motoneurons. May bind to insulin gene enhancer sequences. Essential for heart development. This chain is Insulin gene enhancer protein isl-1 (isl1), found in Danio rerio (Zebrafish).